Consider the following 512-residue polypeptide: MEQETFEEQEITVADINANVPQEVQNYLRSFNKAIQEKSLKEIEEHYEYKWRRTTDQYFKDSRWPEPVYIQAMFEQEGQEDSYFVSLYPELYYRDVYYRSSNTNIEITVEDRHASYDHYIELINMFVEPDAPLDLELPNKWLWDMIDEFLYQFQDFVIFRSRVDDAKTESDYQEIAERPNAWNVTIVLNALHSLILKSEINEQLEAYRSGQNPTEMAGAFGKSSLYKMLGCFSLVGLVRLQCHLGDYRQALQIMKNVDLDRRFIFSLVPACNVSLHYHLGFCYLMLRRYQDAFRLFESILIQMASHRGPGHYDGGRKRDTIVCLLALAYSLLPQRLERSVEHLMNEKEGENIRKIQSGEGADEAINHLLLRGAPRFLCPFLADPQQPPEEDVLKAESERQLELFKQEAKQLILLGQIRSYLKLYTRMKLEKLAKFLELTVPQLRSMLHSFKHKMSQIVHTPGGEPLAGERQFTDSVDFYVDGDEICIATMTVKKSYGDDFLTASLKMVTSNR.

The PCI domain occupies 291–477 (DAFRLFESIL…GERQFTDSVD (187 aa)).

Belongs to the eIF-3 subunit L family. In terms of assembly, component of the eukaryotic translation initiation factor 3 (eIF-3) complex.

It localises to the cytoplasm. Its function is as follows. Component of the eukaryotic translation initiation factor 3 (eIF-3) complex, which is involved in protein synthesis of a specialized repertoire of mRNAs and, together with other initiation factors, stimulates binding of mRNA and methionyl-tRNAi to the 40S ribosome. The eIF-3 complex specifically targets and initiates translation of a subset of mRNAs involved in cell proliferation. The protein is Eukaryotic translation initiation factor 3 subunit L of Monosiga brevicollis (Choanoflagellate).